The sequence spans 239 residues: Purine nucleoside phosphorylase DeoD-type (239 aa).

His-5 is a binding site for a purine D-ribonucleoside. Phosphate-binding residues include Gly-21 and Arg-25. Position 27 is an N6-acetyllysine (Lys-27). Residues Arg-44 and 88–91 (RVGS) contribute to the phosphate site. A purine D-ribonucleoside contacts are provided by residues 180–182 (EME) and 204–205 (SD). The active-site Proton donor is the Asp-205.

It belongs to the PNP/UDP phosphorylase family. As to quaternary structure, homohexamer; trimer of homodimers.

The enzyme catalyses a purine D-ribonucleoside + phosphate = a purine nucleobase + alpha-D-ribose 1-phosphate. The catalysed reaction is a purine 2'-deoxy-D-ribonucleoside + phosphate = a purine nucleobase + 2-deoxy-alpha-D-ribose 1-phosphate. Catalyzes the reversible phosphorolytic breakdown of the N-glycosidic bond in the beta-(deoxy)ribonucleoside molecules, with the formation of the corresponding free purine bases and pentose-1-phosphate. In Escherichia coli O8 (strain IAI1), this protein is Purine nucleoside phosphorylase DeoD-type.